Reading from the N-terminus, the 298-residue chain is Inosose dehydratase (298 aa).

This sequence belongs to the IolE/MocC family. Glutathione is required as a cofactor. The cofactor is Co(2+). Requires Mn(2+) as cofactor.

The enzyme catalyses scyllo-inosose = 3D-3,5/4-trihydroxycyclohexane-1,2-dione + H2O. It participates in polyol metabolism; myo-inositol degradation into acetyl-CoA; acetyl-CoA from myo-inositol: step 2/7. In terms of biological role, catalyzes the dehydration of inosose (2-keto-myo-inositol, 2KMI or 2,4,6/3,5-pentahydroxycyclohexanone) to 3D-(3,5/4)-trihydroxycyclohexane-1,2-dione (D-2,3-diketo-4-deoxy-epi-inositol). This chain is Inosose dehydratase, found in Lacticaseibacillus casei (Lactobacillus casei).